Reading from the N-terminus, the 551-residue chain is Probable terpene synthase 8 (551 aa).

Mg(2+) is bound by residues D307, D311, and E457. A DDXXD motif motif is present at residues 307 to 311; the sequence is DDTYD.

It belongs to the terpene synthase family. Mg(2+) is required as a cofactor.

Its function is as follows. Probable sesquiterpene synthase. The chain is Probable terpene synthase 8 (TPS8) from Ricinus communis (Castor bean).